The chain runs to 171 residues: Peptidyl-prolyl cis-trans isomerase (171 aa).

A PPIase cyclophilin-type domain is found at 7–170; that stretch reads FFDLTIGGAP…KPVVIADCGQ (164 aa).

This sequence belongs to the cyclophilin-type PPIase family. Expressed in leaves, floral buds, growing shoots and stamens at anthesis.

Its subcellular location is the cytoplasm. The catalysed reaction is [protein]-peptidylproline (omega=180) = [protein]-peptidylproline (omega=0). Binds cyclosporin A (CsA). CsA mediates some of its effects via an inhibitory action on PPIase. In terms of biological role, PPIases accelerate the folding of proteins. It catalyzes the cis-trans isomerization of proline imidic peptide bonds in oligopeptides. In Solanum lycopersicum (Tomato), this protein is Peptidyl-prolyl cis-trans isomerase.